A 620-amino-acid chain; its full sequence is Probable potassium transport system protein Kup 1 (620 aa).

The next 12 membrane-spanning stretches (helical) occupy residues 10–30 (LLISAIGVVYGDIGTSPLYAL), 50–70 (VLSLVFWTVMLLVTVKYVIVI), 102–122 (MLLGVIAAALFYGDSMITPAI), 138–158 (LTPYVVPITAVVLTGLFMIQK), 168–188 (FGPVMCLWFLVLALLGIVNIV), 211–231 (MMSFFALGSIVLAVTGGEALY), 246–266 (WFALVLPALLLNYFGQGALLL), 284–304 (MVVPMVGLATCATVIASQAVI), 336–356 (IYIPFTNWTLYIAVMALVIGF), 368–388 (IAVTGTMMIDTILVAFVMALM), 393–413 (WIAVAAVAGTLLLVDLAFFFA), and 415–435 (IIKVAQGGWFPLFIGVLSFTV).

The protein belongs to the HAK/KUP transporter (TC 2.A.72) family.

The protein resides in the cell inner membrane. The enzyme catalyses K(+)(in) + H(+)(in) = K(+)(out) + H(+)(out). Its function is as follows. Transport of potassium into the cell. Likely operates as a K(+):H(+) symporter. The chain is Probable potassium transport system protein Kup 1 from Rhodopseudomonas palustris (strain BisB18).